The sequence spans 452 residues: Bifunctional protein GlmU (452 aa).

The interval 1–226 is pyrophosphorylase; the sequence is MSLAVVILAA…GWEVDGVNDR (226 aa). Residues 8 to 11, lysine 22, glutamine 73, 78 to 79, 99 to 101, glycine 136, glutamate 151, asparagine 166, and asparagine 224 contribute to the UDP-N-acetyl-alpha-D-glucosamine site; these read LAAG, GT, and YGD. Aspartate 101 serves as a coordination point for Mg(2+). Asparagine 224 contributes to the Mg(2+) binding site. A linker region spans residues 227 to 247; that stretch reads VQLARLERIYQQAQAETLMRD. Residues 248–452 are N-acetyltransferase; the sequence is GVTLLDPSRL…VANWQRPKKG (205 aa). 2 residues coordinate UDP-N-acetyl-alpha-D-glucosamine: arginine 330 and lysine 348. The active-site Proton acceptor is histidine 360. UDP-N-acetyl-alpha-D-glucosamine contacts are provided by tyrosine 363 and asparagine 374. Acetyl-CoA-binding positions include alanine 377, 383–384, serine 402, alanine 420, and arginine 437; that span reads NY.

In the N-terminal section; belongs to the N-acetylglucosamine-1-phosphate uridyltransferase family. This sequence in the C-terminal section; belongs to the transferase hexapeptide repeat family. In terms of assembly, homotrimer. Mg(2+) is required as a cofactor.

It is found in the cytoplasm. The enzyme catalyses alpha-D-glucosamine 1-phosphate + acetyl-CoA = N-acetyl-alpha-D-glucosamine 1-phosphate + CoA + H(+). It carries out the reaction N-acetyl-alpha-D-glucosamine 1-phosphate + UTP + H(+) = UDP-N-acetyl-alpha-D-glucosamine + diphosphate. It functions in the pathway nucleotide-sugar biosynthesis; UDP-N-acetyl-alpha-D-glucosamine biosynthesis; N-acetyl-alpha-D-glucosamine 1-phosphate from alpha-D-glucosamine 6-phosphate (route II): step 2/2. The protein operates within nucleotide-sugar biosynthesis; UDP-N-acetyl-alpha-D-glucosamine biosynthesis; UDP-N-acetyl-alpha-D-glucosamine from N-acetyl-alpha-D-glucosamine 1-phosphate: step 1/1. It participates in bacterial outer membrane biogenesis; LPS lipid A biosynthesis. Functionally, catalyzes the last two sequential reactions in the de novo biosynthetic pathway for UDP-N-acetylglucosamine (UDP-GlcNAc). The C-terminal domain catalyzes the transfer of acetyl group from acetyl coenzyme A to glucosamine-1-phosphate (GlcN-1-P) to produce N-acetylglucosamine-1-phosphate (GlcNAc-1-P), which is converted into UDP-GlcNAc by the transfer of uridine 5-monophosphate (from uridine 5-triphosphate), a reaction catalyzed by the N-terminal domain. The protein is Bifunctional protein GlmU of Alcanivorax borkumensis (strain ATCC 700651 / DSM 11573 / NCIMB 13689 / SK2).